A 368-amino-acid chain; its full sequence is tRNA/tmRNA (uracil-C(5))-methyltransferase (368 aa).

S-adenosyl-L-methionine is bound by residues Gln-190, Tyr-218, Asn-223, Glu-239, and Asp-301. Cys-326 acts as the Nucleophile in catalysis. The active-site Proton acceptor is the Glu-360.

It belongs to the class I-like SAM-binding methyltransferase superfamily. RNA M5U methyltransferase family. TrmA subfamily.

The catalysed reaction is uridine(54) in tRNA + S-adenosyl-L-methionine = 5-methyluridine(54) in tRNA + S-adenosyl-L-homocysteine + H(+). It carries out the reaction uridine(341) in tmRNA + S-adenosyl-L-methionine = 5-methyluridine(341) in tmRNA + S-adenosyl-L-homocysteine + H(+). In terms of biological role, dual-specificity methyltransferase that catalyzes the formation of 5-methyluridine at position 54 (m5U54) in all tRNAs, and that of position 341 (m5U341) in tmRNA (transfer-mRNA). This chain is tRNA/tmRNA (uracil-C(5))-methyltransferase, found in Aliivibrio salmonicida (strain LFI1238) (Vibrio salmonicida (strain LFI1238)).